The chain runs to 402 residues: Protein FAM53A (402 aa).

S119 carries the post-translational modification Phosphoserine. Residues 170–215 (LVPGLPRRPVSPAGPTSPLTPRPASASSGFVDGSEGSTSSGPPWLS) form a disordered region. The Nuclear localization signal motif lies at 273–281 (RRVRRKRRR). S306 and S309 each carry phosphoserine. Residues 323–333 (TLVSSPCNSQG) show a composition bias toward polar residues. Residues 323–402 (TLVSSPCNSQ…DLDLEQIENN (80 aa)) form a disordered region. The span at 336-345 (GIITPSSSPR) shows a compositional bias: low complexity.

Belongs to the FAM53 family.

The protein resides in the nucleus. Its function is as follows. May play an important role in neural development; the dorsomedial roof of the third ventricle. This Mus musculus (Mouse) protein is Protein FAM53A.